We begin with the raw amino-acid sequence, 83 residues long: RNA-binding protein Hfq (83 aa).

The Sm domain occupies 9-68 (DPFLNALRKERIPVSIYLVNGIKLQGQVESFDQFVILLKNTVSQMVYKHAISTVVPSRAL).

The protein belongs to the Hfq family. In terms of assembly, homohexamer.

In terms of biological role, RNA chaperone that binds small regulatory RNA (sRNAs) and mRNAs to facilitate mRNA translational regulation in response to envelope stress, environmental stress and changes in metabolite concentrations. Also binds with high specificity to tRNAs. The protein is RNA-binding protein Hfq of Pseudoalteromonas atlantica (strain T6c / ATCC BAA-1087).